We begin with the raw amino-acid sequence, 134 residues long: MGLIVDTSIIIALERGKISTKAWSNYDQAYINPIVLTELLIGIDRVKDENKRGQCLTFIEYVKSLFTLLPFGIEEAYVYAKIIDNLYKERITIGVHDLLIAATAITYNYPILTLNTKDFKRIPELEVLTVPLKD.

In terms of domain architecture, PINc spans 4 to 124; that stretch reads IVDTSIIIAL…NTKDFKRIPE (121 aa). Residue aspartate 6 participates in Mg(2+) binding.

This sequence belongs to the PINc/VapC protein family. It depends on Mg(2+) as a cofactor.

Its function is as follows. Toxic component of a type II toxin-antitoxin (TA) system. Has ssRNase activity. Its RNase activity is partially neutralized by cognate antitoxin VapB. Rapidly induces apoptosis upon microinjection into mouse fibroblasts (L929 line). Probably contributes to host cell death if bacterial cell lysis occurs during host infection. The polypeptide is Ribonuclease VapC (Rickettsia bellii (strain RML369-C)).